The chain runs to 411 residues: 2,3-bisphosphoglycerate-independent phosphoglycerate mutase (411 aa).

It belongs to the BPG-independent phosphoglycerate mutase family. A-PGAM subfamily.

It carries out the reaction (2R)-2-phosphoglycerate = (2R)-3-phosphoglycerate. The protein operates within carbohydrate degradation; glycolysis; pyruvate from D-glyceraldehyde 3-phosphate: step 3/5. Its function is as follows. Catalyzes the interconversion of 2-phosphoglycerate and 3-phosphoglycerate. The chain is 2,3-bisphosphoglycerate-independent phosphoglycerate mutase from Methanosphaerula palustris (strain ATCC BAA-1556 / DSM 19958 / E1-9c).